We begin with the raw amino-acid sequence, 179 residues long: Large ribosomal subunit protein uL5 (179 aa).

This sequence belongs to the universal ribosomal protein uL5 family. Part of the 50S ribosomal subunit; part of the 5S rRNA/L5/L18/L25 subcomplex. Contacts the 5S rRNA and the P site tRNA. Forms a bridge to the 30S subunit in the 70S ribosome.

Its function is as follows. This is one of the proteins that bind and probably mediate the attachment of the 5S RNA into the large ribosomal subunit, where it forms part of the central protuberance. In the 70S ribosome it contacts protein S13 of the 30S subunit (bridge B1b), connecting the 2 subunits; this bridge is implicated in subunit movement. Contacts the P site tRNA; the 5S rRNA and some of its associated proteins might help stabilize positioning of ribosome-bound tRNAs. This is Large ribosomal subunit protein uL5 from Methylococcus capsulatus (strain ATCC 33009 / NCIMB 11132 / Bath).